The following is a 162-amino-acid chain: Ribosome maturation factor RimM (162 aa).

Positions 91–162 constitute a PRC barrel domain; that stretch reads DGSFYIDDLI…LIDVVIIEGM (72 aa).

It belongs to the RimM family. Binds ribosomal protein uS19.

It localises to the cytoplasm. Functionally, an accessory protein needed during the final step in the assembly of 30S ribosomal subunit, possibly for assembly of the head region. Essential for efficient processing of 16S rRNA. May be needed both before and after RbfA during the maturation of 16S rRNA. It has affinity for free ribosomal 30S subunits but not for 70S ribosomes. In Finegoldia magna (strain ATCC 29328 / DSM 20472 / WAL 2508) (Peptostreptococcus magnus), this protein is Ribosome maturation factor RimM.